Consider the following 81-residue polypeptide: MRLVVCLVFLASFALVCQGQVYKGGYTRPIPRPPFVRPVPGGPIGPYNGCPVSCRGISFSQARSCCSRLGRCCHVGKGYSG.

Residues 1–19 (MRLVVCLVFLASFALVCQG) form the signal peptide. Glutamine 20 is subject to Pyrrolidone carboxylic acid. Cystine bridges form between cysteine 50-cysteine 65, cysteine 54-cysteine 72, and cysteine 66-cysteine 73. Position 80 is a serine amide (serine 80).

The protein belongs to the penaeidin family. As to expression, higher expression in hemocytes and to a lesser extent in heart, testis, gills, intestine, lymphoid organ and hepatopancreas. Traces in eyes and subcuticular epithelium. Not present in the brain.

The protein resides in the cytoplasmic granule. Its function is as follows. Antibacterial activity against M.luteus and E.coli bacteria. Antifungal activity against N.crassa and F.oxysporum. Presents chitin-binding activity. The protein is Penaeidin-3c of Penaeus vannamei (Whiteleg shrimp).